The sequence spans 361 residues: Versatile peroxidase VPL2 (361 aa).

An N-terminal signal peptide occupies residues 1–22 (MSFKTLSALALALGAAVQFASA). A propeptide spanning residues 23–30 (AVPLVQKR) is cleaved from the precursor. 4 disulfide bridges follow: Cys33-Cys45, Cys44-Cys308, Cys64-Cys144, and Cys272-Cys337. Residues Glu66 and Glu70 each coordinate Mn(2+). His77 (proton acceptor) is an active-site residue. Residues Asp78, Gly90, Asp92, and Ser94 each coordinate Ca(2+). N-linked (GlcNAc...) asparagine glycosylation is present at Asn126. The Tryptophan radical intermediate role is filled by Trp194. Residue His199 participates in heme b binding. Position 200 (Ser200) interacts with Ca(2+). Heme b is bound at residue 203–207 (AADKV). Asp205 is a Mn(2+) binding site. Ca(2+) contacts are provided by Asp217, Thr219, Val222, and Asp224.

It belongs to the peroxidase family. Ligninase subfamily. The cofactor is heme b. Ca(2+) is required as a cofactor.

The protein localises to the secreted. It carries out the reaction 1-(4-hydroxy-3-methoxyphenyl)-2-(2-methoxyphenoxy)propane-1,3-diol + H2O2 = guaiacol + vanillin + glycolaldehyde + H2O. The catalysed reaction is 2 Mn(2+) + H2O2 + 2 H(+) = 2 Mn(3+) + 2 H2O. Its function is as follows. A versatile ligninolytic peroxidase that combines the substrate specificity characteristics of the two other ligninolytic peroxidases, manganese peroxidase and lignin peroxidase. This Pleurotus eryngii (Boletus of the steppes) protein is Versatile peroxidase VPL2 (vpl2).